The following is a 589-amino-acid chain: uncharacterized protein (589 aa).

This is an uncharacterized protein from Bacillus anthracis.